The chain runs to 271 residues: Shikimate dehydrogenase (NADP(+)) (271 aa).

Shikimate contacts are provided by residues 14-16 (SLS) and T61. The active-site Proton acceptor is K65. 2 residues coordinate shikimate: N86 and D101. NADP(+) contacts are provided by residues 125 to 129 (GAGGA) and I212. Y214 serves as a coordination point for shikimate. G235 serves as a coordination point for NADP(+).

Belongs to the shikimate dehydrogenase family. In terms of assembly, homodimer.

The enzyme catalyses shikimate + NADP(+) = 3-dehydroshikimate + NADPH + H(+). Its pathway is metabolic intermediate biosynthesis; chorismate biosynthesis; chorismate from D-erythrose 4-phosphate and phosphoenolpyruvate: step 4/7. Involved in the biosynthesis of the chorismate, which leads to the biosynthesis of aromatic amino acids. Catalyzes the reversible NADPH linked reduction of 3-dehydroshikimate (DHSA) to yield shikimate (SA). This chain is Shikimate dehydrogenase (NADP(+)), found in Clostridium perfringens (strain 13 / Type A).